A 639-amino-acid polypeptide reads, in one-letter code: 2-oxoacid:ferredoxin oxidoreductase 1, subunit alpha (639 aa).

A YPITP motif motif is present at residues 266 to 270 (YPITP). The substrate site is built by Thr269 and Arg352.

As to quaternary structure, heterodimer composed of an alpha and a beta subunit.

It carries out the reaction a 2-oxocarboxylate + 2 oxidized [2Fe-2S]-[ferredoxin] + CoA = an acyl-CoA + 2 reduced [2Fe-2S]-[ferredoxin] + CO2 + H(+). In terms of biological role, catalyzes the coenzyme A-dependent oxidative decarboxylation of different 2-oxoacids such as pyruvate, 2-oxobutyrate and glyoxylate to form their CoA derivatives. This chain is 2-oxoacid:ferredoxin oxidoreductase 1, subunit alpha, found in Aeropyrum pernix (strain ATCC 700893 / DSM 11879 / JCM 9820 / NBRC 100138 / K1).